Reading from the N-terminus, the 743-residue chain is Threonine synthase-like 1 (743 aa).

K281 carries the post-translational modification N6-acetyllysine. The residue at position 351 (K351) is an N6-(pyridoxal phosphate)lysine.

It belongs to the threonine synthase family. Pyridoxal 5'-phosphate is required as a cofactor.

In Pongo abelii (Sumatran orangutan), this protein is Threonine synthase-like 1 (THNSL1).